We begin with the raw amino-acid sequence, 141 residues long: Large ribosomal subunit protein uL11 (141 aa).

The protein belongs to the universal ribosomal protein uL11 family. Part of the ribosomal stalk of the 50S ribosomal subunit. Interacts with L10 and the large rRNA to form the base of the stalk. L10 forms an elongated spine to which L12 dimers bind in a sequential fashion forming a multimeric L10(L12)X complex. One or more lysine residues are methylated.

Its function is as follows. Forms part of the ribosomal stalk which helps the ribosome interact with GTP-bound translation factors. This chain is Large ribosomal subunit protein uL11, found in Nitratiruptor sp. (strain SB155-2).